The following is a 322-amino-acid chain: NADH-quinone oxidoreductase subunit H (322 aa).

A run of 8 helical transmembrane segments spans residues 15 to 35, 82 to 102, 114 to 134, 149 to 169, 186 to 206, 243 to 263, 265 to 285, and 302 to 322; these read ILHITLIIIFIIFFAATLSIL, IFILSPIIAFVSLLLVIPTIP, IGILFFLMMASLSVYAVLFAG, ASAQTLSYEVFLGLSLMGVIA, VWNVIPQFFGFLCFFIAGIAL, ISIITVSALISTVFFGGYFGF, GSSFFWLFLKTVFFILIFILI, and WKICLPLTLLNLIITAFFILI.

It belongs to the complex I subunit 1 family. As to quaternary structure, NDH-1 is composed of 13 different subunits. Subunits NuoA, H, J, K, L, M, N constitute the membrane sector of the complex.

The protein resides in the cell membrane. It catalyses the reaction a quinone + NADH + 5 H(+)(in) = a quinol + NAD(+) + 4 H(+)(out). In terms of biological role, NDH-1 shuttles electrons from NADH, via FMN and iron-sulfur (Fe-S) centers, to quinones in the respiratory chain. The immediate electron acceptor for the enzyme in this species is believed to be ubiquinone. Couples the redox reaction to proton translocation (for every two electrons transferred, four hydrogen ions are translocated across the cytoplasmic membrane), and thus conserves the redox energy in a proton gradient. This subunit may bind ubiquinone. In Buchnera aphidicola subsp. Schizaphis graminum (strain Sg), this protein is NADH-quinone oxidoreductase subunit H.